A 205-amino-acid chain; its full sequence is Peptidyl-tRNA hydrolase (205 aa).

Residue tyrosine 14 coordinates tRNA. The Proton acceptor role is filled by histidine 19. Tyrosine 64, asparagine 66, and asparagine 112 together coordinate tRNA.

Belongs to the PTH family. In terms of assembly, monomer.

The protein localises to the cytoplasm. The catalysed reaction is an N-acyl-L-alpha-aminoacyl-tRNA + H2O = an N-acyl-L-amino acid + a tRNA + H(+). Its function is as follows. Hydrolyzes ribosome-free peptidyl-tRNAs (with 1 or more amino acids incorporated), which drop off the ribosome during protein synthesis, or as a result of ribosome stalling. Functionally, catalyzes the release of premature peptidyl moieties from peptidyl-tRNA molecules trapped in stalled 50S ribosomal subunits, and thus maintains levels of free tRNAs and 50S ribosomes. In Parvibaculum lavamentivorans (strain DS-1 / DSM 13023 / NCIMB 13966), this protein is Peptidyl-tRNA hydrolase.